Reading from the N-terminus, the 552-residue chain is Glutamate--tRNA ligase (552 aa).

Positions 102–112 match the 'HIGH' region motif; that stretch reads PNPSGPLHIGH.

Belongs to the class-I aminoacyl-tRNA synthetase family. Glutamate--tRNA ligase type 2 subfamily.

It is found in the cytoplasm. The catalysed reaction is tRNA(Glu) + L-glutamate + ATP = L-glutamyl-tRNA(Glu) + AMP + diphosphate. In terms of biological role, catalyzes the attachment of glutamate to tRNA(Glu) in a two-step reaction: glutamate is first activated by ATP to form Glu-AMP and then transferred to the acceptor end of tRNA(Glu). This is Glutamate--tRNA ligase from Methanothermobacter marburgensis (strain ATCC BAA-927 / DSM 2133 / JCM 14651 / NBRC 100331 / OCM 82 / Marburg) (Methanobacterium thermoautotrophicum).